We begin with the raw amino-acid sequence, 344 residues long: MPIATPEVYAEMLGQAKQNSYAFPAINCTSSETVNAAIKGFADAGSDGIIQFSTGGAEFGSGLGVKDMVTGAVALAEFTHVIAAKYPVNVALHTDHCPKDKLDSYVRPLLAISAQRVSKGGNPLFQSHMWDGSAVPIDENLAIAQELLKAAAAAKIILEIEIGVVGGEEDGVANEINEKLYTSPEDFEKTIEALGAGEHGKYLLAATFGNVHGVYKPGNVKLRPDILAQGQQVAAAKLGLPADAKPFDFVFHGGSGSLKSEIEEALRYGVVKMNVDTDTQYAFTRPIAGHMFTNYDGVLKVDGEVGVKKVYDPRSYLKKAEASMSQRVVQACNDLHCAGKSLTH.

Residue serine 53 coordinates D-glyceraldehyde 3-phosphate. The Proton donor role is filled by aspartate 95. Histidine 96, aspartate 131, glutamate 161, and histidine 212 together coordinate Zn(2+). Residue glycine 213 coordinates dihydroxyacetone phosphate. Histidine 252 contacts Zn(2+). Residues 253-255 (GGS) and 274-277 (NVDT) contribute to the dihydroxyacetone phosphate site.

It belongs to the class II fructose-bisphosphate aldolase family. Zn(2+) serves as cofactor.

The enzyme catalyses beta-D-fructose 1,6-bisphosphate = D-glyceraldehyde 3-phosphate + dihydroxyacetone phosphate. It participates in carbohydrate degradation; glycolysis; D-glyceraldehyde 3-phosphate and glycerone phosphate from D-glucose: step 4/4. Its function is as follows. Catalyzes the aldol condensation of dihydroxyacetone phosphate (DHAP or glycerone-phosphate) with glyceraldehyde 3-phosphate (G3P) to form fructose 1,6-bisphosphate (FBP) in gluconeogenesis and the reverse reaction in glycolysis. The polypeptide is Fructose-bisphosphate aldolase (fba) (Mycobacterium bovis (strain ATCC BAA-935 / AF2122/97)).